The following is a 528-amino-acid chain: Pentatricopeptide repeat-containing protein At1g62914, mitochondrial (528 aa).

The N-terminal 20 residues, 1 to 20, are a transit peptide targeting the mitochondrion; sequence MLAKISSSAKRFVHRSLVVR. 13 PPR repeats span residues 77 to 111, 112 to 146, 147 to 181, 182 to 216, 217 to 251, 252 to 286, 287 to 321, 322 to 356, 357 to 391, 392 to 426, 427 to 461, 462 to 496, and 497 to 528; these read SIIE…GISH, NLYT…GYEP, DIVT…GYKP, DTVT…GCQP, DLVT…KIEA, NVVI…GVRP, NVIT…KINP, NLVT…SIDP, NIFT…DCLP, NVVT…GLVG, NTVT…GVHP, NILT…TMEP, and DIYT…ALKE.

It belongs to the PPR family. P subfamily.

Its subcellular location is the mitochondrion. The polypeptide is Pentatricopeptide repeat-containing protein At1g62914, mitochondrial (Arabidopsis thaliana (Mouse-ear cress)).